We begin with the raw amino-acid sequence, 75 residues long: RNA-binding protein KhpA (75 aa).

Positions 29-75 (SIILELKVAPEDMGKVIGKQGRIAKAIRTVIKAAAVKENKRVVVEII) constitute a KH domain.

Belongs to the KhpA RNA-binding protein family. In terms of assembly, forms a complex with KhpB.

The protein localises to the cytoplasm. In terms of biological role, a probable RNA chaperone. Forms a complex with KhpB which binds to cellular RNA and controls its expression. Plays a role in peptidoglycan (PG) homeostasis and cell length regulation. This Clostridium acetobutylicum (strain ATCC 824 / DSM 792 / JCM 1419 / IAM 19013 / LMG 5710 / NBRC 13948 / NRRL B-527 / VKM B-1787 / 2291 / W) protein is RNA-binding protein KhpA.